We begin with the raw amino-acid sequence, 676 residues long: MEKNLPDIFFFPNCVNVFSYKYSQDEFSNMSKTERDNFSLAVFPVIKHRWHNAHVVKHKGIYKVSTEARGKKVSPPSLGKPAHINLMSKQYIYSEYAISFECYSFLKCITNTEINSFDEYILRGLLEAGNSLQIFSNSVGKRIDTIGVLGNKYPFSKIPLASLTPKAQREIFLAWISHRPVVLTGGTGVGKTSQVPKLLLWFNYLFGGFSSLDKITDFHERPVILSLPRIALVRLHSNTILKSLGFKVLDGSPISLRYGSIPEELINKQPKKYGIVFSTHKLSLTKLFSYGTIIIDEVHEHDQIGDIIIAVARKHHTKIDSMFLMTATLEDDRERLKIFLPNPAFIHIPGDTLFKISEVFIHNKINPSSRMAYIEEEKRNLVTAIQMYTPPDGSSGIVFVASVAQCHEYKSYLEKRLPYDMYIIHGKVLDIDEILEKVYSSPNVSIIISTPYLESSVTIRNVTHIYDMGRVFVPAPFGGSQQFISKSMRDQRKGRVGRVNPGTYVYFYDLSYMKSIQRIDSEFLHNYILYANKFNLTLPEDLFIIPTNLDILWRTKEYIDSFDISTETWNKLLSNYYMKMIEYAKLYVLSPILAEELDNFERTGELTSIVQEAILSLNLQIKILKFKHKDDDTYIHFCRILFGVYNGTNATIYYHRPLTGYMNMISDTIFVPVDNN.

In terms of domain architecture, Helicase ATP-binding spans 172 to 347; that stretch reads FLAWISHRPV…IFLPNPAFIH (176 aa). 185–192 serves as a coordination point for ATP; sequence GGTGVGKT. Residues 296–299 carry the DEXH box motif; sequence DEVH. Residues 366–535 form the Helicase C-terminal domain; it reads NPSSRMAYIE…NYILYANKFN (170 aa).

The protein belongs to the DEAD box helicase family. DEAH subfamily. Monomer.

It is found in the virion. The enzyme catalyses ATP + H2O = ADP + phosphate + H(+). Functionally, NTP-dependent helicase that catalyzes unidirectional unwinding of 3'tailed duplex RNAs and plays an important role during transcription of early mRNAs, presumably by preventing R-loop formation behind the elongating RNA polymerase. Might also play a role in the export of newly synthesized mRNA chains out of the core into the cytoplasm. Required for replication and propagation of viral particles. The chain is RNA helicase NPH-II (OPG084) from Monkeypox virus.